A 75-amino-acid chain; its full sequence is Putative UPF0377 protein YJL222W-A (75 aa).

It belongs to the UPF0377 family.

In Saccharomyces cerevisiae (strain ATCC 204508 / S288c) (Baker's yeast), this protein is Putative UPF0377 protein YJL222W-A.